Consider the following 125-residue polypeptide: Profilin-A (125 aa).

N-acetylserine is present on S2.

It belongs to the profilin family. As to quaternary structure, occurs in many kinds of cells as a complex with monomeric actin in a 1:1 ratio.

It is found in the cytoplasm. Its subcellular location is the cytoskeleton. In terms of biological role, binds to actin and affects the structure of the cytoskeleton. At high concentrations, profilin prevents the polymerization of actin, whereas it enhances it at low concentrations. By binding to PIP2, it inhibits the formation of IP3 and DG. This chain is Profilin-A (PROA), found in Physarum polycephalum (Slime mold).